Here is a 239-residue protein sequence, read N- to C-terminus: Probable transcriptional regulatory protein lin0388 (239 aa).

The protein belongs to the TACO1 family. YeeN subfamily.

The protein resides in the cytoplasm. The sequence is that of Probable transcriptional regulatory protein lin0388 from Listeria innocua serovar 6a (strain ATCC BAA-680 / CLIP 11262).